The sequence spans 427 residues: UDP-N-acetyl-D-mannosamine dehydrogenase (427 aa).

NAD(+) is bound by residues Y19, I20, D39, R44, T91, and T130. UDP-N-acetyl-alpha-D-mannosaminouronate-binding residues include R155, V156, K207, N211, R214, H245, R247, and G258. K207 (proton donor/acceptor) is an active-site residue. C261 functions as the Nucleophile in the catalytic mechanism. Residues Y318 and K319 each contribute to the UDP-N-acetyl-alpha-D-mannosaminouronate site. Residue R326 participates in NAD(+) binding. UDP-N-acetyl-alpha-D-mannosaminouronate is bound at residue K404.

It belongs to the UDP-glucose/GDP-mannose dehydrogenase family. Homotetramer; probably dimer of dimers.

It catalyses the reaction UDP-N-acetyl-alpha-D-mannosamine + 2 NAD(+) + H2O = UDP-N-acetyl-alpha-D-mannosaminouronate + 2 NADH + 3 H(+). Its function is as follows. Catalyzes the four-electron oxidation of UDP-N-acetyl-D-mannosamine (UDP-ManNAc), reducing NAD(+) and releasing UDP-N-acetylmannosaminuronic acid (UDP-ManNAcA). Cannot use NADP instead of NAD. The protein is UDP-N-acetyl-D-mannosamine dehydrogenase (wecC) of Methanococcus maripaludis (strain DSM 14266 / JCM 13030 / NBRC 101832 / S2 / LL).